Reading from the N-terminus, the 2092-residue chain is Nonribosomal peptide synthetase echPS (2092 aa).

The tract at residues 13–406 is adenylation 1; the sequence is FSQRCCQNPD…GRRDRVTKIR (394 aa). The Carrier 1 domain maps to 524-600; the sequence is SGPLTIGQAI…SLIEKSRHET (77 aa). Ser561 is modified (O-(pantetheine 4'-phosphoryl)serine). A disordered region spans residues 596-626; it reads SRHETEDTPDSSAFATRTPEESSMPTQGPVT. The segment covering 605 to 624 has biased composition (polar residues); that stretch reads DSSAFATRTPEESSMPTQGP. The tract at residues 624 to 1017 is condensation 1; the sequence is PVTPLQKRMV…YTSLLDAFLD (394 aa). The tract at residues 1068 to 1446 is adenylation 2; sequence ASLYPTHVAV…GRKDRQVKVR (379 aa). Positions 1544–1622 constitute a Carrier 2 domain; it reads IKTTHLEKLI…DLVILVAQQQ (79 aa). Position 1582 is an O-(pantetheine 4'-phosphoryl)serine (Ser1582). A condensation 2 region spans residues 1663 to 2047; the sequence is SQSQSTFNVS…EALLLECFRI (385 aa).

It belongs to the NRP synthetase family. Pantetheine 4'-phosphate serves as cofactor.

It catalyses the reaction L-tryptophan + L-alanine + 2 ATP = cyclo(L-tryptophyl-L-alanyl) + 2 ADP + 2 phosphate + 2 H(+). Its pathway is secondary metabolite biosynthesis. It participates in alkaloid biosynthesis. Nonribosomal peptide synthetase; part of the gene cluster that mediates the biosynthesis of echinulin family alkaloid. The pathway begins with the biosynthesis of the cyclic dipeptide cyclo-L-Trp-L-Ala (cyclo-TA) by the NRPS echPS via condensation of L-alanine and L-tryptophan. The prenyltransferase echPT1 then catalyzes the first prenylation step, a reverse prenylation reaction at C2, to yield preechinulin. Preechinulin is the substrate of the cytochrome P450 monooxygenase echP450 that catalyzes the formation of the double bond between C10 and C11 to produce neoechulin A. The unique prenyltransferase echPT2 functions as a competitive enzyme with echP450 for preechinulin metabolization and uses preechinulin for effective regiospecific prenylations. Preechinulin is prenylated by echPT2 at C5 or C7. C7-prenylation leads to accumulation of tardioxopiperazine B without further modification by echPT2. In contrast, the C5-prenylated tardioxopiperazine A can be prenylated again by echPT2, predominantly at C7 to form echinulin or less frequently at C4 to give variecolorin L. EchPT2 also accepts neoechilunin A to produce varlecolorin G (prenylation at C5) or isoechinulin A (prenylation at C7). EchPT2 further converts isoechinulin A into dehydroechinulin. Moreover, a yet unidentified enzyme can also convert neoechilunin A into neoechilunin B by introducing a double bond between positions C14 and C17 and thus provides a further substrate to echPT2 for C5 and C7 prenylation. The chain is Nonribosomal peptide synthetase echPS from Aspergillus ruber (strain CBS 135680).